We begin with the raw amino-acid sequence, 390 residues long: Protein MalY (390 aa).

K233 carries the N6-(pyridoxal phosphate)lysine modification.

Belongs to the class-II pyridoxal-phosphate-dependent aminotransferase family. MalY/PatB cystathionine beta-lyase subfamily. In terms of assembly, homodimer. Interacts with MalT. It depends on pyridoxal 5'-phosphate as a cofactor.

It catalyses the reaction L,L-cystathionine + H2O = L-homocysteine + pyruvate + NH4(+). It carries out the reaction an S-substituted L-cysteine + H2O = a thiol + pyruvate + NH4(+). Functionally, acts as a beta-cystathionase and as a repressor of the maltose regulon. This chain is Protein MalY (malY), found in Escherichia coli (strain K12).